A 466-amino-acid polypeptide reads, in one-letter code: Gamma-aminobutyric acid receptor subunit gamma-2 (466 aa).

The N-terminal stretch at 1-38 is a signal peptide; it reads MSSPNTWSTGSTVYSPVFSQKMTLWILLLLSLYPGFTS. The Extracellular portion of the chain corresponds to 39–274; sequence QKSDDDYEDY…FDLSRRMGYF (236 aa). Residues asparagine 51 and asparagine 128 are each glycosylated (N-linked (GlcNAc...) asparagine). Cysteines 189 and 203 form a disulfide. Asparagine 246 carries an N-linked (GlcNAc...) asparagine glycan. A helical membrane pass occupies residues 275-295; it reads TIQTYIPCTLIVVLSWVSFWI. Residues 296–301 lie on the Cytoplasmic side of the membrane; the sequence is NKDAVP. The helical transmembrane segment at 302 to 321 threads the bilayer; it reads ARTSLGITTVLTMTTLSTIA. At 322–333 the chain is on the extracellular side; the sequence is RKSLPKVSYVTA. A helical transmembrane segment spans residues 334-358; the sequence is MDLFVSVCFIFVFSALVEYGTLHYF. The Cytoplasmic portion of the chain corresponds to 359 to 442; it reads VSNRKPSKDK…IHIRIAKMDS (84 aa). Residues 443–463 traverse the membrane as a helical segment; that stretch reads YARIFFPTAFCLFNLVYWVSY. At 464–466 the chain is on the extracellular side; the sequence is LYL.

Belongs to the ligand-gated ion channel (TC 1.A.9) family. Gamma-aminobutyric acid receptor (TC 1.A.9.5) subfamily. GABRG2 sub-subfamily. Heteropentamer, formed by a combination of alpha (GABRA1-6), beta (GABRB1-3), gamma (GABRG1-3), delta (GABRD), epsilon (GABRE), rho (GABRR1-3), pi (GABRP) and theta (GABRQ) chains, each subunit exhibiting distinct physiological and pharmacological properties. Interacts with GABARAP. Interacts with KIF21B. Identified in a complex of 720 kDa composed of LHFPL4, NLGN2, GABRA1, GABRB2, GABRG2 and GABRB3. Interacts with LHFPL4. Interacts with SHISA7; interaction leads to the regulation of GABA(A) receptor trafficking, channel deactivation kinetics and pharmacology. Palmitoylated by ZDHHC3/GODZ; required for the accumulation of GABA(A) receptors at the postsynaptic membrane of inhibitory GABAergic synapses. Post-translationally, glycosylated. As to expression, expressed in brain (at protein level). Expressed in lungs, in alveolar epithelium.

It localises to the postsynaptic cell membrane. The protein localises to the cell membrane. The protein resides in the cell projection. It is found in the dendrite. Its subcellular location is the cytoplasmic vesicle membrane. The enzyme catalyses chloride(in) = chloride(out). Its activity is regulated as follows. Allosterically activated by benzodiazepines. Activated by pentobarbital. Inhibited by the antagonist bicuculline. Inhibited by zinc ions. Potentiated by histamine. In terms of biological role, gamma subunit of the heteropentameric ligand-gated chloride channel gated by gamma-aminobutyric acid (GABA), a major inhibitory neurotransmitter in the brain. GABA-gated chloride channels, also named GABA(A) receptors (GABAAR), consist of five subunits arranged around a central pore and contain GABA active binding site(s) located at the alpha and beta subunit interface(s). When activated by GABA, GABAARs selectively allow the flow of chloride anions across the cell membrane down their electrochemical gradient. Gamma-2/GABRG2-containing GABAARs are found at both synaptic and extrasynaptic sites. Chloride influx into the postsynaptic neuron following GABAAR opening decreases the neuron ability to generate a new action potential, thereby reducing nerve transmission. GABAARs containing alpha-1 and beta-2 or -3 subunits exhibit synaptogenic activity; the gamma-2 subunit being necessary but not sufficient to induce rapid synaptic contacts formation. Extrasynaptic gamma-2-containing receptors contribute to the tonic GABAergic inhibition. GABAARs function also as histamine receptor where histamine binds at the interface of two neighboring beta subunits and potentiates GABA response in a gamma-2 subunit-controlled manner. This Rattus norvegicus (Rat) protein is Gamma-aminobutyric acid receptor subunit gamma-2.